The sequence spans 118 residues: Large ribosomal subunit protein uL22 (118 aa).

The protein belongs to the universal ribosomal protein uL22 family. As to quaternary structure, part of the 50S ribosomal subunit.

In terms of biological role, this protein binds specifically to 23S rRNA; its binding is stimulated by other ribosomal proteins, e.g. L4, L17, and L20. It is important during the early stages of 50S assembly. It makes multiple contacts with different domains of the 23S rRNA in the assembled 50S subunit and ribosome. Its function is as follows. The globular domain of the protein is located near the polypeptide exit tunnel on the outside of the subunit, while an extended beta-hairpin is found that lines the wall of the exit tunnel in the center of the 70S ribosome. The chain is Large ribosomal subunit protein uL22 from Leuconostoc citreum (strain KM20).